The chain runs to 794 residues: Copper amine oxidase-like protein cao2 (794 aa).

Residues Ala-307–Arg-318 and Ala-391–Tyr-396 contribute to the substrate site. Asp-309 acts as the Proton acceptor in catalysis. Catalysis depends on Tyr-394, which acts as the Schiff-base intermediate with substrate; via topaquinone. Tyr-394 bears the 2',4',5'-topaquinone mark. Cu cation-binding residues include His-445 and His-447. The tract at residues Gly-563–Asp-584 is disordered. Residues Asp-593 and Ile-594 each contribute to the Mn(2+) site. His-604 is a Cu cation binding site. The segment at Ala-634 to His-748 is disordered. Over residues Thr-637 to Ser-649 the composition is skewed to low complexity. Basic and acidic residues predominate over residues Thr-652–Ser-714. The span at Thr-716–Gln-727 shows a compositional bias: polar residues.

The protein belongs to the copper/topaquinone oxidase family. In terms of assembly, homodimer. Cu cation is required as a cofactor. Zn(2+) serves as cofactor. It depends on L-topaquinone as a cofactor. Requires Mn(2+) as cofactor. Post-translationally, topaquinone (TPQ) is generated by copper-dependent autoxidation of a specific tyrosyl residue.

Its subcellular location is the cytoplasm. The catalysed reaction is a primary methyl amine + O2 + H2O = an aldehyde + H2O2 + NH4(+). Its function is as follows. Copper amine oxidase-like protein that does not show any copper amine oxidase activity. May be the appropriate amine substrate for cao2 has not been identified yet. This chain is Copper amine oxidase-like protein cao2 (cao2), found in Schizosaccharomyces pombe (strain 972 / ATCC 24843) (Fission yeast).